The following is a 111-amino-acid chain: Cell division protein FtsB (111 aa).

Residues 1-3 lie on the Cytoplasmic side of the membrane; that stretch reads MGK. A helical membrane pass occupies residues 4–21; that stretch reads LTLLLLILLGWLQYSLWL. Over 22–111 the chain is Periplasmic; sequence GKNGIHDYVR…TNTPSNNIQR (90 aa). The stretch at 33-63 forms a coiled coil; the sequence is KDDVVVQQGNNAKLKDRNEQLFAEIDDLNGG. The disordered stretch occupies residues 90–111; it reads ESNHRNANTAPSTNTPSNNIQR. Over residues 95 to 111 the composition is skewed to low complexity; the sequence is NANTAPSTNTPSNNIQR.

This sequence belongs to the FtsB family. In terms of assembly, part of a complex composed of FtsB, FtsL and FtsQ.

It localises to the cell inner membrane. Essential cell division protein. May link together the upstream cell division proteins, which are predominantly cytoplasmic, with the downstream cell division proteins, which are predominantly periplasmic. The chain is Cell division protein FtsB from Pectobacterium carotovorum subsp. carotovorum (strain PC1).